The following is a 66-amino-acid chain: Large ribosomal subunit protein bL33c (66 aa).

This sequence belongs to the bacterial ribosomal protein bL33 family.

The protein resides in the plastid. It is found in the chloroplast. The polypeptide is Large ribosomal subunit protein bL33c (Aethionema grandiflorum (Persian stone-cress)).